A 60-amino-acid polypeptide reads, in one-letter code: Ribosome biogenesis protein Nop10 (60 aa).

Residues 29 to 60 form a disordered region; it reads CDGPTENSAPAPFSPEDPYGEYRRRVRRRASE.

Belongs to the NOP10 family.

Its function is as follows. Involved in ribosome biogenesis; more specifically in 18S rRNA pseudouridylation and in cleavage of pre-rRNA. This chain is Ribosome biogenesis protein Nop10, found in Halorubrum lacusprofundi (strain ATCC 49239 / DSM 5036 / JCM 8891 / ACAM 34).